Reading from the N-terminus, the 658-residue chain is Translation factor GUF1, mitochondrial (658 aa).

The transit peptide at 1 to 40 (MRGCLQTVRWLTSAWQRPPSYPPLSRAAPCRFFNVSIPRN) directs the protein to the mitochondrion. Positions 60-240 (DRFRNFCIVA…TVVEQIPAPV (181 aa)) constitute a tr-type G domain. Residues 69–76 (AHVDHGKS), 133–137 (DTPGH), and 187–190 (NKVD) contribute to the GTP site.

It belongs to the TRAFAC class translation factor GTPase superfamily. Classic translation factor GTPase family. LepA subfamily.

It localises to the mitochondrion inner membrane. It catalyses the reaction GTP + H2O = GDP + phosphate + H(+). Its function is as follows. Promotes mitochondrial protein synthesis. May act as a fidelity factor of the translation reaction, by catalyzing a one-codon backward translocation of tRNAs on improperly translocated ribosomes. Binds to mitochondrial ribosomes in a GTP-dependent manner. This is Translation factor GUF1, mitochondrial from Paracoccidioides brasiliensis (strain Pb18).